A 172-amino-acid chain; its full sequence is Regulator of hemoglobinization and erythroid cell expansion protein (172 aa).

The helical transmembrane segment at 9 to 29 (WHGLVIAVVSLFLQACFLTAI) threads the bilayer. The tract at residues 52–106 (VPRPSPGHHHPPAVKEMKETQTERDIPMSDSLYRHDSDTPSDSLDSSCSSPPACQ) is disordered. Residues 64–89 (AVKEMKETQTERDIPMSDSLYRHDSD) show a composition bias toward basic and acidic residues. Positions 91 to 103 (PSDSLDSSCSSPP) are enriched in low complexity. 2 positions are modified to phosphotyrosine: tyrosine 132 and tyrosine 141.

In terms of assembly, interacts with EPOR; this interaction occurs in a erythropoietin (EPO)-dependent manner. Interacts with JAK2; this interaction occurs in a erythropoietin (EPO)-dependent manner. Interacts (via tyrosine-phosphorylated form) with GRB2. Phosphorylated. Phosphorylation on Tyr-132 and Tyr-141 occurs in a erythropoietin (EPO)-dependent manner. Expressed in the proerythroblasts (at protein level). Expressed strongly in the kidney. Expressed weakly in the pancreas, liver and lung. Expressed strongly in erythroid progenitor cells (EPCs). Expressed weakly in T-cells and neutrophils.

The protein resides in the cell membrane. Its function is as follows. Acts as a signaling transduction factor of the EPO-EPOR signaling pathway promoting erythroid cell differentiation. The polypeptide is Regulator of hemoglobinization and erythroid cell expansion protein (Homo sapiens (Human)).